The primary structure comprises 496 residues: Protein nucleotidyltransferase YdiU (496 aa).

ATP is bound by residues glycine 98, glycine 100, arginine 101, lysine 116, aspartate 128, glycine 129, arginine 179, and arginine 186. Aspartate 259 acts as the Proton acceptor in catalysis. Mg(2+)-binding residues include asparagine 260 and aspartate 269. Aspartate 269 lines the ATP pocket.

The protein belongs to the SELO family. Mg(2+) is required as a cofactor. Requires Mn(2+) as cofactor.

The catalysed reaction is L-seryl-[protein] + ATP = 3-O-(5'-adenylyl)-L-seryl-[protein] + diphosphate. It catalyses the reaction L-threonyl-[protein] + ATP = 3-O-(5'-adenylyl)-L-threonyl-[protein] + diphosphate. It carries out the reaction L-tyrosyl-[protein] + ATP = O-(5'-adenylyl)-L-tyrosyl-[protein] + diphosphate. The enzyme catalyses L-histidyl-[protein] + UTP = N(tele)-(5'-uridylyl)-L-histidyl-[protein] + diphosphate. The catalysed reaction is L-seryl-[protein] + UTP = O-(5'-uridylyl)-L-seryl-[protein] + diphosphate. It catalyses the reaction L-tyrosyl-[protein] + UTP = O-(5'-uridylyl)-L-tyrosyl-[protein] + diphosphate. In terms of biological role, nucleotidyltransferase involved in the post-translational modification of proteins. It can catalyze the addition of adenosine monophosphate (AMP) or uridine monophosphate (UMP) to a protein, resulting in modifications known as AMPylation and UMPylation. The sequence is that of Protein nucleotidyltransferase YdiU from Albidiferax ferrireducens (strain ATCC BAA-621 / DSM 15236 / T118) (Rhodoferax ferrireducens).